We begin with the raw amino-acid sequence, 523 residues long: Light-independent protochlorophyllide reductase subunit B (523 aa).

A [4Fe-4S] cluster-binding site is contributed by Asp-36. The active-site Proton donor is Asp-290. 425–426 provides a ligand contact to substrate; the sequence is GL.

It belongs to the ChlB/BchB/BchZ family. Protochlorophyllide reductase is composed of three subunits; ChlL, ChlN and ChlB. Forms a heterotetramer of two ChlB and two ChlN subunits. The cofactor is [4Fe-4S] cluster.

It carries out the reaction chlorophyllide a + oxidized 2[4Fe-4S]-[ferredoxin] + 2 ADP + 2 phosphate = protochlorophyllide a + reduced 2[4Fe-4S]-[ferredoxin] + 2 ATP + 2 H2O. It functions in the pathway porphyrin-containing compound metabolism; chlorophyll biosynthesis (light-independent). In terms of biological role, component of the dark-operative protochlorophyllide reductase (DPOR) that uses Mg-ATP and reduced ferredoxin to reduce ring D of protochlorophyllide (Pchlide) to form chlorophyllide a (Chlide). This reaction is light-independent. The NB-protein (ChlN-ChlB) is the catalytic component of the complex. This chain is Light-independent protochlorophyllide reductase subunit B, found in Prochlorococcus marinus (strain MIT 9301).